A 515-amino-acid chain; its full sequence is Cytochrome P450 76C3 (515 aa).

Residues 5–25 (LIQGMSLPLYFLLTLFFFFFA) form a helical membrane-spanning segment. Cysteine 451 lines the heme pocket.

Belongs to the cytochrome P450 family. It depends on heme as a cofactor.

The protein localises to the membrane. The protein is Cytochrome P450 76C3 (CYP76C3) of Arabidopsis thaliana (Mouse-ear cress).